A 471-amino-acid polypeptide reads, in one-letter code: Tryptophanase (471 aa).

N6-acetyllysine is present on residues Lys-5, Lys-115, and Lys-156. Lys-270 bears the N6-(pyridoxal phosphate)lysine mark. At Lys-450 the chain carries N6-acetyllysine.

The protein belongs to the beta-eliminating lyase family. In terms of assembly, homotetramer. The cofactor is pyridoxal 5'-phosphate.

The catalysed reaction is L-tryptophan + H2O = indole + pyruvate + NH4(+). Its pathway is amino-acid degradation; L-tryptophan degradation via pyruvate pathway; indole and pyruvate from L-tryptophan: step 1/1. The polypeptide is Tryptophanase (Shigella boydii serotype 18 (strain CDC 3083-94 / BS512)).